An 82-amino-acid polypeptide reads, in one-letter code: Putative defensin-like protein 70 (82 aa).

Residues Met1–Gly27 form the signal peptide. 4 disulfides stabilise this stretch: Cys39–Cys80, Cys43–Cys66, Cys52–Cys78, and Cys56–Cys79.

Belongs to the DEFL family.

It is found in the secreted. The sequence is that of Putative defensin-like protein 70 (LCR83) from Arabidopsis thaliana (Mouse-ear cress).